A 160-amino-acid chain; its full sequence is Protransforming growth factor alpha (160 aa).

The signal sequence occupies residues 1–23; sequence MVPSAGQFALFALGILLAVCQAL. Positions 24 to 39 are cleaved as a propeptide — removed in mature form; that stretch reads ENSTSALSADPPIAAA. Residues 24–98 are Extracellular-facing; it reads ENSTSALSAD…AVVAASQKKQ (75 aa). The N-linked (GlcNAc...) asparagine glycan is linked to Asn-25. The EGF-like domain maps to 43–83; sequence HFNDCPDSHSQFCFHGTCRFLVQEDKPACVCHSGYVGARCE. 3 disulfide bridges follow: Cys-47-Cys-60, Cys-55-Cys-71, and Cys-73-Cys-82. The propeptide at 90 to 160 is removed in mature form; sequence VVAASQKKQA…TACCHSETVV (71 aa). Residues 99–124 traverse the membrane as a helical segment; the sequence is AITALVVVSIVALAVLIITCVLIHCC. Over 125–160 the chain is Cytoplasmic; it reads QVRKHCEWCRALICRHEKPSALLKGRTACCHSETVV. S-palmitoyl cysteine attachment occurs at residues Cys-153 and Cys-154.

As to quaternary structure, interacts with the PDZ domains of MAGI3, SDCBP and SNTA1. The interaction with SDCBP, is required for the targeting to the cell surface. In the endoplasmic reticulum, in its immature form (i.e. with a prosegment and lacking full N-glycosylation), interacts with CNIH. In the Golgi apparatus, may form a complex with CNIH and GORASP2. Interacts (via cytoplasmic C-terminal domain) with NKD2.

Its subcellular location is the secreted. The protein localises to the extracellular space. It is found in the cell membrane. TGF alpha is a mitogenic polypeptide that is able to bind to the EGF receptor/EGFR and to act synergistically with TGF beta to promote anchorage-independent cell proliferation in soft agar. The sequence is that of Protransforming growth factor alpha (TGFA) from Sus scrofa (Pig).